The primary structure comprises 253 residues: Triosephosphate isomerase (253 aa).

9–11 contacts substrate; that stretch reads NWK. The Electrophile role is filled by His95. Glu167 functions as the Proton acceptor in the catalytic mechanism. Residues Gly173, Ser213, and 234–235 contribute to the substrate site; that span reads GG. Ser213 carries the phosphoserine modification.

The protein belongs to the triosephosphate isomerase family. Homodimer.

It is found in the cytoplasm. The catalysed reaction is D-glyceraldehyde 3-phosphate = dihydroxyacetone phosphate. It functions in the pathway carbohydrate biosynthesis; gluconeogenesis. It participates in carbohydrate degradation; glycolysis; D-glyceraldehyde 3-phosphate from glycerone phosphate: step 1/1. Functionally, involved in the gluconeogenesis. Catalyzes stereospecifically the conversion of dihydroxyacetone phosphate (DHAP) to D-glyceraldehyde-3-phosphate (G3P). The sequence is that of Triosephosphate isomerase from Bacillus velezensis (strain DSM 23117 / BGSC 10A6 / LMG 26770 / FZB42) (Bacillus amyloliquefaciens subsp. plantarum).